Here is a 240-residue protein sequence, read N- to C-terminus: MLQVQHENHFFLFNFDENRPNQEHFFESYFWQKQNRIIGSAKGRGTTWFIQSQDLFGVNTALRHYYRGGLWGKINKDRYAFSSLEETRSFAEFNLLNRLYQAGLPVPKPIGAHVEKLAFNHYRADLLSERIENTQDLTALLPNTELTAEQWQQIGKLIRRLHDLQICHTDLNAHNILIRQQNNDTKFWLIDFDKCGEKPGNLWKQENLQRLHRSFLKEVKRMRIQFSEKNWADLLNGYQN.

The active site involves D170.

This sequence belongs to the protein kinase superfamily. KdkA/RfaP family.

Its subcellular location is the cell inner membrane. The catalysed reaction is an alpha-Kdo-(2-&gt;6)-lipid IVA + ATP = a 4-O-phospho-alpha-Kdo-(2-&gt;6)-lipid IVA + ADP + H(+). It functions in the pathway bacterial outer membrane biogenesis; LPS core biosynthesis. In terms of biological role, catalyzes the ATP-dependent phosphorylation of the 3-deoxy-D-manno-octulosonic acid (Kdo) residue in Kdo-lipid IV(A) at the 4-OH position. The protein is 3-deoxy-D-manno-octulosonic acid kinase of Mannheimia succiniciproducens (strain KCTC 0769BP / MBEL55E).